A 213-amino-acid polypeptide reads, in one-letter code: Endoplasmic reticulum vesicle protein 25 (213 aa).

Positions 1–20 (MILRIPSLLYLFTLLTAVYA) are cleaved as a signal peptide. Residues 21–181 (VKFDLTSDRN…TNESTNQRVK (161 aa)) are Lumenal-facing. The GOLD domain occupies 33–122 (PKCIWNFASA…VRSVELDVDI (90 aa)). The chain crosses the membrane as a helical span at residues 182 to 202 (VFSVLIICCTIGLGVWQLLHL). The Cytoplasmic portion of the chain corresponds to 203–213 (RSFFKRKYLID).

It belongs to the EMP24/GP25L family.

It localises to the endoplasmic reticulum membrane. Its subcellular location is the golgi apparatus membrane. Its function is as follows. Constituent of COPII-coated endoplasmic reticulum-derived transport vesicles. Required for efficient transport of a subset of secretory proteins to the Golgi. Facilitates retrograde transport from the Golgi to the endoplasmic reticulum. This chain is Endoplasmic reticulum vesicle protein 25 (ERV25), found in Cryptococcus neoformans var. neoformans serotype D (strain JEC21 / ATCC MYA-565) (Filobasidiella neoformans).